Here is a 253-residue protein sequence, read N- to C-terminus: 3-dehydroquinate dehydratase (253 aa).

3-dehydroquinate-binding positions include 46 to 48 (EWR) and R82. Residue H143 is the Proton donor/acceptor of the active site. K170 (schiff-base intermediate with substrate) is an active-site residue. The 3-dehydroquinate site is built by R213, S232, and Q236.

It belongs to the type-I 3-dehydroquinase family. As to quaternary structure, homodimer.

It catalyses the reaction 3-dehydroquinate = 3-dehydroshikimate + H2O. It participates in metabolic intermediate biosynthesis; chorismate biosynthesis; chorismate from D-erythrose 4-phosphate and phosphoenolpyruvate: step 3/7. Functionally, involved in the third step of the chorismate pathway, which leads to the biosynthesis of aromatic amino acids. Catalyzes the cis-dehydration of 3-dehydroquinate (DHQ) and introduces the first double bond of the aromatic ring to yield 3-dehydroshikimate. The polypeptide is 3-dehydroquinate dehydratase (Bacillus velezensis (strain DSM 23117 / BGSC 10A6 / LMG 26770 / FZB42) (Bacillus amyloliquefaciens subsp. plantarum)).